The chain runs to 620 residues: MSQQKKGIGLLVSAIGVVFGDIGTSPLYALKETFAGHHPIPVTPDNIFGVLSLVFWTVMLLVTVKYVIVIMRADNHGEGGSLALLALVTELTRGRRVHYPLMMLGVIAAALFYGDSMITPAISVLSAVEGLEVVTPDLKAYVVPITAVVLTLLFAIQSRGTGLVGRLFGPVMCMWFLTLALLGIANIVHAPEVLEAISPTFAIEFVFRHPLMSFYALGSVVLAVTGGEALYTDMGHFGRFPIRLAWFGLVLPALLLNYFGQGALLIHDPSAIQNPFFRLGPEWMVVPMVALATLATVIASQAVISGAYSVARQAIQLGLLPRMTIVHTSGEEAGQIYVPFTNWTLYFAVMALVVGFQSSSNLAAAYGIAVTGTMMIDTILVSFVAALLWRWHPVVVAVVIGTLLLLDFAFFAANIIKVAQGGWFPLFIGFISFTVLTTWRRGRALVRKQLKKQAVPLDVVLRALGPNVSRARGTAVFLTAATDGVPPALLHNLKHNQTVHQRVILTTVSTAETPYVPDSERVHMTDIGDGFHRLIIRYGFMQTPDVPAALSLCKQFGHEFNMMSTSFFLSRETYVPSLNPGMALWRERLFTFMTLNATRATTFFKIPTDRVVELGTQLEI.

12 helical membrane passes run 7-27 (GIGL…TSPL), 50-70 (VLSL…VIVI), 102-122 (MMLG…TPAI), 136-156 (PDLK…LFAI), 168-188 (FGPV…ANIV), 211-231 (LMSF…EALY), 246-266 (WFGL…ALLI), 284-304 (MVVP…QAVI), 336-356 (IYVP…VVGF), 368-388 (IAVT…AALL), 393-413 (PVVV…FFAA), and 415-435 (IIKV…SFTV).

It belongs to the HAK/KUP transporter (TC 2.A.72) family.

It localises to the cell inner membrane. The catalysed reaction is K(+)(in) + H(+)(in) = K(+)(out) + H(+)(out). Transport of potassium into the cell. Likely operates as a K(+):H(+) symporter. In Rhodopseudomonas palustris (strain ATCC BAA-98 / CGA009), this protein is Probable potassium transport system protein Kup 1.